A 387-amino-acid polypeptide reads, in one-letter code: S-adenosylmethionine synthase (387 aa).

Histidine 16 serves as a coordination point for ATP. Position 18 (aspartate 18) interacts with Mg(2+). Glutamate 44 is a K(+) binding site. Residues glutamate 57 and glutamine 100 each contribute to the L-methionine site. The segment at glutamine 100–arginine 110 is flexible loop. Residues aspartate 167–lysine 169, arginine 232–phenylalanine 233, aspartate 241, arginine 247–lysine 248, alanine 264, and lysine 268 each bind ATP. L-methionine is bound at residue aspartate 241. Lysine 272 contributes to the L-methionine binding site.

This sequence belongs to the AdoMet synthase family. In terms of assembly, homotetramer; dimer of dimers. It depends on Mg(2+) as a cofactor. Requires K(+) as cofactor.

The protein localises to the cytoplasm. It catalyses the reaction L-methionine + ATP + H2O = S-adenosyl-L-methionine + phosphate + diphosphate. It participates in amino-acid biosynthesis; S-adenosyl-L-methionine biosynthesis; S-adenosyl-L-methionine from L-methionine: step 1/1. Functionally, catalyzes the formation of S-adenosylmethionine (AdoMet) from methionine and ATP. The overall synthetic reaction is composed of two sequential steps, AdoMet formation and the subsequent tripolyphosphate hydrolysis which occurs prior to release of AdoMet from the enzyme. This chain is S-adenosylmethionine synthase, found in Cupriavidus necator (strain ATCC 17699 / DSM 428 / KCTC 22496 / NCIMB 10442 / H16 / Stanier 337) (Ralstonia eutropha).